The following is a 101-amino-acid chain: Phosphoribosyl-AMP cyclohydrolase (101 aa).

Aspartate 71 contributes to the Mg(2+) binding site. Cysteine 72 lines the Zn(2+) pocket. Mg(2+) contacts are provided by aspartate 73 and aspartate 75. 2 residues coordinate Zn(2+): cysteine 88 and cysteine 95.

It belongs to the PRA-CH family. As to quaternary structure, homodimer. The cofactor is Mg(2+). Zn(2+) is required as a cofactor.

The protein resides in the cytoplasm. It catalyses the reaction 1-(5-phospho-beta-D-ribosyl)-5'-AMP + H2O = 1-(5-phospho-beta-D-ribosyl)-5-[(5-phospho-beta-D-ribosylamino)methylideneamino]imidazole-4-carboxamide. It functions in the pathway amino-acid biosynthesis; L-histidine biosynthesis; L-histidine from 5-phospho-alpha-D-ribose 1-diphosphate: step 3/9. Catalyzes the hydrolysis of the adenine ring of phosphoribosyl-AMP. The chain is Phosphoribosyl-AMP cyclohydrolase from Bacillus cereus (strain 03BB102).